The following is a 496-amino-acid chain: Glycylpeptide N-tetradecanoyltransferase 1 (496 aa).

The tract at residues 1–81 is disordered; that stretch reads MADESETAVK…DSTQDQPVKM (81 aa). Ser31 and Ser47 each carry phosphoserine. The span at 55–66 shows a compositional bias: basic residues; the sequence is KKKKKKQKKKKE. A Phosphoserine modification is found at Ser83. Residues Gln118, Phe119, Trp120, Phe247, Leu248, Cys249, Val250, Ser256, Arg258, Val259, and Ala260 each coordinate tetradecanoyl-CoA.

The protein belongs to the NMT family.

The protein localises to the cytoplasm. Its subcellular location is the cytosol. It localises to the membrane. It catalyses the reaction N-terminal glycyl-[protein] + tetradecanoyl-CoA = N-tetradecanoylglycyl-[protein] + CoA + H(+). The enzyme catalyses N-terminal glycyl-L-lysyl-[protein] + tetradecanoyl-CoA = N-terminal glycyl-(N(6)-tetradecanoyl)-L-lysyl-[protein] + CoA + H(+). Its function is as follows. Adds a myristoyl group to the N-terminal glycine residue of certain cellular and viral proteins. Also able to mediate N-terminal lysine myristoylation of proteins: catalyzes myristoylation of ARF6 on both 'Gly-2' and 'Lys-3'. Lysine myristoylation is required to maintain ARF6 on membranes during the GTPase cycle. The chain is Glycylpeptide N-tetradecanoyltransferase 1 (Nmt1) from Rattus norvegicus (Rat).